Here is a 212-residue protein sequence, read N- to C-terminus: Protein G1-like7 (212 aa).

A compositionally biased stretch (low complexity) spans 1–22 (MDPSGPGPSSAAAGGAPAVAAA). Disordered stretches follow at residues 1 to 34 (MDPS…RYES) and 148 to 212 (KARG…PSAS). The 128-residue stretch at 31 to 158 (RYESQKRRDW…ARGIPYEKKK (128 aa)) folds into the ALOG domain. The Nuclear localization signal signature appears at 156–160 (KKKRK). Residues 167-182 (PAGVEPSGSSSAAAAA) show a composition bias toward low complexity. Residues 183-194 (AGGGDAGSGGGA) show a composition bias toward gly residues. Positions 195 to 212 (AATTTAQPGGSGTAPSAS) are enriched in low complexity.

The protein belongs to the plant homeotic and developmental regulators ALOG protein family.

The protein localises to the nucleus. Probable transcription regulator that acts as a developmental regulator by promoting cell growth in response to light. This Oryza sativa subsp. japonica (Rice) protein is Protein G1-like7 (G1L7).